We begin with the raw amino-acid sequence, 323 residues long: tRNA U34 carboxymethyltransferase (323 aa).

Carboxy-S-adenosyl-L-methionine-binding positions include lysine 91, tryptophan 105, lysine 110, glycine 130, 152–154 (DPT), 181–182 (IE), methionine 196, tyrosine 200, and arginine 315.

Belongs to the class I-like SAM-binding methyltransferase superfamily. CmoB family. In terms of assembly, homotetramer.

The catalysed reaction is carboxy-S-adenosyl-L-methionine + 5-hydroxyuridine(34) in tRNA = 5-carboxymethoxyuridine(34) in tRNA + S-adenosyl-L-homocysteine + H(+). In terms of biological role, catalyzes carboxymethyl transfer from carboxy-S-adenosyl-L-methionine (Cx-SAM) to 5-hydroxyuridine (ho5U) to form 5-carboxymethoxyuridine (cmo5U) at position 34 in tRNAs. The polypeptide is tRNA U34 carboxymethyltransferase (Shigella dysenteriae serotype 1 (strain Sd197)).